A 322-amino-acid chain; its full sequence is MNLYSYSRIIKFPGHNALVLKRLFHRPYQFKSVPDDIKNNLVTECECFVKRLNEKLPDKSQLDISLTLPNKVPEYHKHVLMLSKDPKGWKNWPSKLEMAHEYPHSMVGTLKSSLKDTRDGSGVLVNELALDGYTSSETHLKFLVIPDMKVYEVHRDRVSDFALFLGDGKQDSRKKLSFNDFLKGSDAVGQTAIHSSGSVANSIPNFQSEPFHSDIAMVCGHYLRDARCGELAPLLIAKLNSIKPNLKTGIVSHFGGHKFAGNLIYYQFNGLKIHNDNETGKIDGLWLSKLLPQNLEFVFRHLDKDIILQDFYRGHMSTAAYT.

This sequence belongs to the AIM32 family.

This chain is Altered inheritance of mitochondria protein 32 (AIM32), found in Kluyveromyces lactis (strain ATCC 8585 / CBS 2359 / DSM 70799 / NBRC 1267 / NRRL Y-1140 / WM37) (Yeast).